The sequence spans 324 residues: uncharacterized protein (324 aa).

This is an uncharacterized protein from Homo sapiens (Human).